The following is a 1355-amino-acid chain: DNA-directed RNA polymerase subunit beta' (1355 aa).

Cysteine 219, cysteine 293, cysteine 300, and cysteine 303 together coordinate Zn(2+). Positions 1331-1355 are disordered; sequence AEVEVDDEVDDDYEDDDEDDDDYED.

It belongs to the RNA polymerase beta' chain family. RpoC2 subfamily. As to quaternary structure, in cyanobacteria the RNAP catalytic core is composed of 2 alpha, 1 beta, 1 beta', 1 gamma and 1 omega subunit. When a sigma factor is associated with the core the holoenzyme is formed, which can initiate transcription. Zn(2+) serves as cofactor.

It carries out the reaction RNA(n) + a ribonucleoside 5'-triphosphate = RNA(n+1) + diphosphate. Functionally, DNA-dependent RNA polymerase catalyzes the transcription of DNA into RNA using the four ribonucleoside triphosphates as substrates. This is DNA-directed RNA polymerase subunit beta' from Trichormus variabilis (strain ATCC 29413 / PCC 7937) (Anabaena variabilis).